The following is a 175-amino-acid chain: MGLENVPAGKALPDDIYVVIEIPANSDPIKYEVDKESGSLFVDRFMSTAMFYPANYGYVNHTLSSDGDPVDVLVPTPYPLQPGSVIRCRPVGVLKMTDEAGGDAKVVAVPHTKLTKEYDHIKDVNDLPALLKAQIQHFFESYKALEVGKWVKVEGWGDVNEARQEILDSFERAKK.

The substrate site is built by Lys-30, Arg-44, and Tyr-56. Positions 66, 71, and 103 each coordinate Mg(2+). Tyr-142 provides a ligand contact to substrate.

This sequence belongs to the PPase family. As to quaternary structure, homohexamer. The cofactor is Mg(2+).

It localises to the cytoplasm. It catalyses the reaction diphosphate + H2O = 2 phosphate + H(+). In terms of biological role, catalyzes the hydrolysis of inorganic pyrophosphate (PPi) forming two phosphate ions. This Haemophilus ducreyi (strain 35000HP / ATCC 700724) protein is Inorganic pyrophosphatase.